We begin with the raw amino-acid sequence, 809 residues long: WASP homolog-associated protein with actin, membranes and microtubules (809 aa).

The tract at residues 1–260 is mediates association with membranes; the sequence is MEDEQPDSLE…EVATLCKLDI (260 aa). A mediates interaction with microtubules region spans residues 261–630; that stretch reads LKSLDEDDLG…FVPVGDQTHS (370 aa). Coiled coils occupy residues 271-298, 384-479, and 512-542; these read PRRV…IQDI, ELEI…CAKR, and SIQM…LQRL. Disordered stretches follow at residues 506–528, 546–571, 586–612, and 627–707; these read YSRQ…QKKK, KDKR…PSDL, IHPS…CQNC, and QTHS…FSCP. A compositionally biased stretch (basic and acidic residues) spans 515 to 528; sequence MKRDKIKEEEQKKK. S606 is subject to Phosphoserine. Positions 631–809 are mediates actin nucleation; that stretch reads KSSEELSLPP…DEQDPGQWDG (179 aa). Residues 638-659 show a composition bias toward pro residues; that stretch reads LPPPPPPPPPPPPPPPPPPPPL. The segment covering 662–673 has biased composition (polar residues); sequence LSSSSQAATHQN. 2 consecutive WH2 domains span residues 709–727 and 739–756; these read SMDE…LRKV and INEH…LKKV. Positions 754 to 809 are disordered; sequence KKVHPDLGPNPSSKPTSNRRTSDLERSIKAALQRIKRVSADSEEDSDEQDPGQWDG. A compositionally biased stretch (polar residues) spans 763 to 772; the sequence is NPSSKPTSNR. Residues 770-797 adopt a coiled-coil conformation; sequence SNRRTSDLERSIKAALQRIKRVSADSEE. Over residues 794–803 the composition is skewed to acidic residues; the sequence is DSEEDSDEQD. Phosphoserine is present on S795.

Interacts with ACTR3; indicative for an association with the ARP2/3 complex. Associates with microtubules; in vitro binds to tubulin heterodimer in a 1:1 stoichiometry; decorates microtubules with a repeat of 80 A along protofilaments. Interacts with RHOD (in GTP-bound form). Expressed in brain, lung, heart, colon and kidney (at protein level).

It localises to the cytoplasm. The protein resides in the endoplasmic reticulum-Golgi intermediate compartment. Its subcellular location is the cytoplasmic vesicle membrane. The protein localises to the golgi apparatus. It is found in the cis-Golgi network. In terms of biological role, acts as a nucleation-promoting factor (NPF) that stimulates Arp2/3-mediated actin polymerization both at the Golgi apparatus and along tubular membranes. Its activity in membrane tubulation requires F-actin and interaction with microtubules. Proposed to use coordinated actin-nucleating and microtubule-binding activities of distinct WHAMM molecules to drive membrane tubule elongation; when MT-bound can recruit and remodel membrane vesicles but is prevented to activate the Arp2/3 complex. Involved as a regulator of Golgi positioning and morphology. Participates in vesicle transport between the reticulum endoplasmic and the Golgi complex. Required for RhoD-dependent actin reorganization such as in cell adhesion and cell migration. The protein is WASP homolog-associated protein with actin, membranes and microtubules (WHAMM) of Homo sapiens (Human).